Here is a 473-residue protein sequence, read N- to C-terminus: Bifunctional protein HldE (473 aa).

The segment at 1 to 318 (MKLSMPRFDQ…RAIQREEGSE (318 aa)) is ribokinase. An ATP-binding site is contributed by 194-197 (NLSE). Residue Asp263 is part of the active site. Positions 343–473 (FTNGCFDILH…TAIVEKIRKN (131 aa)) are cytidylyltransferase.

This sequence in the N-terminal section; belongs to the carbohydrate kinase PfkB family. In the C-terminal section; belongs to the cytidylyltransferase family. In terms of assembly, homodimer.

It carries out the reaction D-glycero-beta-D-manno-heptose 7-phosphate + ATP = D-glycero-beta-D-manno-heptose 1,7-bisphosphate + ADP + H(+). It catalyses the reaction D-glycero-beta-D-manno-heptose 1-phosphate + ATP + H(+) = ADP-D-glycero-beta-D-manno-heptose + diphosphate. It participates in nucleotide-sugar biosynthesis; ADP-L-glycero-beta-D-manno-heptose biosynthesis; ADP-L-glycero-beta-D-manno-heptose from D-glycero-beta-D-manno-heptose 7-phosphate: step 1/4. Its pathway is nucleotide-sugar biosynthesis; ADP-L-glycero-beta-D-manno-heptose biosynthesis; ADP-L-glycero-beta-D-manno-heptose from D-glycero-beta-D-manno-heptose 7-phosphate: step 3/4. Functionally, catalyzes the phosphorylation of D-glycero-D-manno-heptose 7-phosphate at the C-1 position to selectively form D-glycero-beta-D-manno-heptose-1,7-bisphosphate. Its function is as follows. Catalyzes the ADP transfer from ATP to D-glycero-beta-D-manno-heptose 1-phosphate, yielding ADP-D-glycero-beta-D-manno-heptose. The protein is Bifunctional protein HldE of Pseudomonas putida (strain GB-1).